The following is a 319-amino-acid chain: G-protein coupled receptor 171 (319 aa).

Residues 1 to 21 lie on the Extracellular side of the membrane; that stretch reads MTNSSTFCPVYRDLEPFTYFF. N-linked (GlcNAc...) asparagine glycosylation occurs at N3. The chain crosses the membrane as a helical span at residues 22–42; it reads YLVFLIGIIGSCFATWAFIQK. Residues 43 to 48 lie on the Cytoplasmic side of the membrane; the sequence is TTNHRC. The helical transmembrane segment at 49–69 threads the bilayer; sequence VSIYLINLLTADFLLTLALPV. Topologically, residues 70 to 89 are extracellular; sequence KIIVDLGVAPWKLRIFHCQV. The helical transmembrane segment at 90–110 threads the bilayer; that stretch reads TACLIYINMYLSIIFLAFVSI. Over 111-132 the chain is Cytoplasmic; it reads DRCLQLIHSCKIYRIQEPGFAK. Residues 133–153 form a helical membrane-spanning segment; sequence MISAVVWLMVLLIMVPNMVIP. At 154 to 181 the chain is on the extracellular side; the sequence is IKDIKEKSNVGCMEFKKEFGRNWHLLTN. A helical membrane pass occupies residues 182 to 202; the sequence is FICVAIFLNFSVIILISNFLA. The Cytoplasmic segment spans residues 203-224; the sequence is IRQLYRNRDNTNYPSVKSALLH. A helical membrane pass occupies residues 225–245; sequence ILLVTASYIICFVPYHAVRIP. At 246-268 the chain is on the extracellular side; that stretch reads YTLSQTEVISDCSTRIALFKAKE. A helical transmembrane segment spans residues 269–289; the sequence is ATLLLAVSNLCFDPILYYHLS. Topologically, residues 290-319 are cytoplasmic; that stretch reads KAFRLKVTETFASPKKSKPLEERLRSENDV.

Belongs to the G-protein coupled receptor 1 family. As to expression, highly expressed in hypothalamus, including the arcuate nucleus, paraventricular nucleus and dorsomedial hypothalamus. Expressed in periaqueductal gray (at protein level), found primarily in GABAergic neurons and to a lesser extent in glutamatergic neurons. Expressed in T cells and natural killer cells.

It is found in the cell membrane. G-protein coupled receptor for Big LEN, a 16-amino acid neuropeptide produced from the precursor protein, proSAAS (encoded by PCSK1N). Acts through a G(i)-alpha-mediated pathway in response to Big LEN. Big LEN-GPR171 system plays an important role in regulating feeding and metabolism. Also plays a role in modulating fear and anxiety-like behaviors in the basolateral amygdala. Big LEN-GPR171 modulates the mu-type opioid receptor signaling and antinociception. Acts as a negative regulator T cell function. The protein is G-protein coupled receptor 171 (Gpr171) of Mus musculus (Mouse).